The following is a 65-amino-acid chain: Large ribosomal subunit protein bL35 (65 aa).

It belongs to the bacterial ribosomal protein bL35 family.

This is Large ribosomal subunit protein bL35 from Borrelia turicatae (strain 91E135).